Reading from the N-terminus, the 341-residue chain is Ferredoxin--NADP reductase (341 aa).

Residues E36, Q44, F49, V89, F123, D289, and T329 each contribute to the FAD site.

The protein belongs to the ferredoxin--NADP reductase type 2 family. Homodimer. It depends on FAD as a cofactor.

It carries out the reaction 2 reduced [2Fe-2S]-[ferredoxin] + NADP(+) + H(+) = 2 oxidized [2Fe-2S]-[ferredoxin] + NADPH. In Ligilactobacillus salivarius (strain UCC118) (Lactobacillus salivarius), this protein is Ferredoxin--NADP reductase.